The chain runs to 104 residues: Nucleoid-associated protein LSL_1227 (104 aa).

Positions 1–19 are enriched in low complexity; sequence MMMRGMNMQSMMKQMQKLQ. The tract at residues 1 to 24 is disordered; the sequence is MMMRGMNMQSMMKQMQKLQKNMKK.

It belongs to the YbaB/EbfC family. As to quaternary structure, homodimer.

Its subcellular location is the cytoplasm. It is found in the nucleoid. Its function is as follows. Binds to DNA and alters its conformation. May be involved in regulation of gene expression, nucleoid organization and DNA protection. This chain is Nucleoid-associated protein LSL_1227, found in Ligilactobacillus salivarius (strain UCC118) (Lactobacillus salivarius).